A 447-amino-acid chain; its full sequence is Phosphoglucosamine mutase (447 aa).

The active-site Phosphoserine intermediate is Ser102. Residues Ser102, Asp241, Asp243, and Asp245 each contribute to the Mg(2+) site. Ser102 carries the phosphoserine modification.

The protein belongs to the phosphohexose mutase family. It depends on Mg(2+) as a cofactor. Post-translationally, activated by phosphorylation.

The enzyme catalyses alpha-D-glucosamine 1-phosphate = D-glucosamine 6-phosphate. Functionally, catalyzes the conversion of glucosamine-6-phosphate to glucosamine-1-phosphate. The sequence is that of Phosphoglucosamine mutase from Methylococcus capsulatus (strain ATCC 33009 / NCIMB 11132 / Bath).